Reading from the N-terminus, the 87-residue chain is Prolactin-releasing peptide (87 aa).

The N-terminal stretch at 1 to 22 is a signal peptide; sequence MKVLRAWLLCLLMLGLALRGAA. Position 53 is a phenylalanine amide (Phe-53). Positions 58-87 are excised as a propeptide; sequence ATLGDVPKPGLRPRLTCFPLEGGAMSSQDG.

In terms of tissue distribution, medulla oblongata and hypothalamus.

It is found in the secreted. In terms of biological role, stimulates prolactin (PRL) release and regulates the expression of prolactin through its receptor GPR10. May stimulate lactotrophs directly to secrete PRL. The protein is Prolactin-releasing peptide (PRLH) of Homo sapiens (Human).